A 655-amino-acid chain; its full sequence is Threonine--tRNA ligase (655 aa).

A TGS domain is found at 1-66; it reads MIDLVFPDGS…TGERKFEILT (66 aa). Residues 248-540 form a catalytic region; that stretch reads DHRKLGKTMD…LLENFAGALP (293 aa). Residues Cys-340, His-391, and His-517 each coordinate Zn(2+).

Belongs to the class-II aminoacyl-tRNA synthetase family. Homodimer. It depends on Zn(2+) as a cofactor.

It is found in the cytoplasm. The catalysed reaction is tRNA(Thr) + L-threonine + ATP = L-threonyl-tRNA(Thr) + AMP + diphosphate + H(+). Its function is as follows. Catalyzes the attachment of threonine to tRNA(Thr) in a two-step reaction: L-threonine is first activated by ATP to form Thr-AMP and then transferred to the acceptor end of tRNA(Thr). Also edits incorrectly charged L-seryl-tRNA(Thr). This is Threonine--tRNA ligase from Caulobacter vibrioides (strain ATCC 19089 / CIP 103742 / CB 15) (Caulobacter crescentus).